We begin with the raw amino-acid sequence, 154 residues long: D-ribose pyranase 2 (154 aa).

His20 functions as the Proton donor in the catalytic mechanism. Substrate-binding positions include Asp28, His98, and 121 to 123 (WGN).

It belongs to the RbsD / FucU family. RbsD subfamily. As to quaternary structure, homodecamer.

It localises to the cytoplasm. The catalysed reaction is beta-D-ribopyranose = beta-D-ribofuranose. It participates in carbohydrate metabolism; D-ribose degradation; D-ribose 5-phosphate from beta-D-ribopyranose: step 1/2. Functionally, catalyzes the interconversion of beta-pyran and beta-furan forms of D-ribose. In Rubrobacter xylanophilus (strain DSM 9941 / JCM 11954 / NBRC 16129 / PRD-1), this protein is D-ribose pyranase 2.